Consider the following 258-residue polypeptide: ATP synthase subunit a (258 aa).

6 consecutive transmembrane segments (helical) span residues 30–50 (SSYF…VAMS), 85–105 (FFPF…LGMF), 122–142 (LIVT…YGVF), 151–171 (LFVP…IEII), 198–218 (FAGF…LAGI), and 230–250 (LEFL…CIYL).

It belongs to the ATPase A chain family. As to quaternary structure, F-type ATPases have 2 components, CF(1) - the catalytic core - and CF(0) - the membrane proton channel. CF(1) has five subunits: alpha(3), beta(3), gamma(1), delta(1), epsilon(1). CF(0) has three main subunits: a(1), b(2) and c(9-12). The alpha and beta chains form an alternating ring which encloses part of the gamma chain. CF(1) is attached to CF(0) by a central stalk formed by the gamma and epsilon chains, while a peripheral stalk is formed by the delta and b chains.

It localises to the cell inner membrane. Functionally, key component of the proton channel; it plays a direct role in the translocation of protons across the membrane. This is ATP synthase subunit a from Maricaulis maris (strain MCS10) (Caulobacter maris).